The sequence spans 689 residues: Glycine--tRNA ligase beta subunit (689 aa).

The protein belongs to the class-II aminoacyl-tRNA synthetase family. In terms of assembly, tetramer of two alpha and two beta subunits.

Its subcellular location is the cytoplasm. It catalyses the reaction tRNA(Gly) + glycine + ATP = glycyl-tRNA(Gly) + AMP + diphosphate. The chain is Glycine--tRNA ligase beta subunit from Shewanella sp. (strain W3-18-1).